A 446-amino-acid polypeptide reads, in one-letter code: Trigger factor (446 aa).

A PPIase FKBP-type domain is found at 163–248; the sequence is GDRLVIDFEG…VKEIKKKNLL (86 aa).

The protein belongs to the FKBP-type PPIase family. Tig subfamily.

Its subcellular location is the cytoplasm. It carries out the reaction [protein]-peptidylproline (omega=180) = [protein]-peptidylproline (omega=0). Involved in protein export. Acts as a chaperone by maintaining the newly synthesized protein in an open conformation. Functions as a peptidyl-prolyl cis-trans isomerase. The protein is Trigger factor of Natranaerobius thermophilus (strain ATCC BAA-1301 / DSM 18059 / JW/NM-WN-LF).